The primary structure comprises 739 residues: Pre-mRNA-splicing factor ATP-dependent RNA helicase ddx-15 (739 aa).

Positions 1-19 are enriched in basic and acidic residues; it reads MSSRHRLDLDGSGRGDRRR. The segment at 1–49 is disordered; that stretch reads MSSRHRLDLDGSGRGDRRRSPNRRSRSRSRSPHRRSSPDRKRQIGAVGN. The segment covering 20–35 has biased composition (basic residues); it reads SPNRRSRSRSRSPHRR. Residues 86–257 enclose the Helicase ATP-binding domain; it reads MELLRNNQCI…FEDCPLLSVP (172 aa). ATP is bound at residue 99–106; sequence GETGSGKT. Positions 204 to 207 match the DEAH box motif; that stretch reads DEAH. Positions 282 to 462 constitute a Helicase C-terminal domain; sequence TVIQIHMVEE…SVVLQLKKLG (181 aa).

It belongs to the DEAD box helicase family. DEAH subfamily. DDX15/PRP43 sub-subfamily.

The protein resides in the nucleus. The catalysed reaction is ATP + H2O = ADP + phosphate + H(+). Pre-mRNA processing factor involved in disassembly of spliceosomes after the release of mature mRNA. In Caenorhabditis elegans, this protein is Pre-mRNA-splicing factor ATP-dependent RNA helicase ddx-15.